A 231-amino-acid chain; its full sequence is Cytochrome c oxidase subunit 2 (231 aa).

Residues 1–14 (MATPAQLGLQNATS) are Mitochondrial intermembrane-facing. The helical transmembrane segment at 15–45 (PIMEELIAFHDHALMIIFLISSLVLYIISLM) threads the bilayer. The Mitochondrial matrix segment spans residues 46–59 (LTTKLTHTSTMNAQ). A helical membrane pass occupies residues 60 to 87 (EIEMIWTILPAIILIMIALPSLRILYMT). The Mitochondrial intermembrane portion of the chain corresponds to 88-231 (DEFNKPYLTL…WASYLYIVSL (144 aa)). H161, C196, E198, C200, H204, and M207 together coordinate Cu cation. A Mg(2+)-binding site is contributed by E198.

It belongs to the cytochrome c oxidase subunit 2 family. As to quaternary structure, component of the cytochrome c oxidase (complex IV, CIV), a multisubunit enzyme composed of 14 subunits. The complex is composed of a catalytic core of 3 subunits MT-CO1, MT-CO2 and MT-CO3, encoded in the mitochondrial DNA, and 11 supernumerary subunits COX4I, COX5A, COX5B, COX6A, COX6B, COX6C, COX7A, COX7B, COX7C, COX8 and NDUFA4, which are encoded in the nuclear genome. The complex exists as a monomer or a dimer and forms supercomplexes (SCs) in the inner mitochondrial membrane with NADH-ubiquinone oxidoreductase (complex I, CI) and ubiquinol-cytochrome c oxidoreductase (cytochrome b-c1 complex, complex III, CIII), resulting in different assemblies (supercomplex SCI(1)III(2)IV(1) and megacomplex MCI(2)III(2)IV(2)). Found in a complex with TMEM177, COA6, COX18, COX20, SCO1 and SCO2. Interacts with TMEM177 in a COX20-dependent manner. Interacts with COX20. Interacts with COX16. Cu cation serves as cofactor.

It is found in the mitochondrion inner membrane. It carries out the reaction 4 Fe(II)-[cytochrome c] + O2 + 8 H(+)(in) = 4 Fe(III)-[cytochrome c] + 2 H2O + 4 H(+)(out). Functionally, component of the cytochrome c oxidase, the last enzyme in the mitochondrial electron transport chain which drives oxidative phosphorylation. The respiratory chain contains 3 multisubunit complexes succinate dehydrogenase (complex II, CII), ubiquinol-cytochrome c oxidoreductase (cytochrome b-c1 complex, complex III, CIII) and cytochrome c oxidase (complex IV, CIV), that cooperate to transfer electrons derived from NADH and succinate to molecular oxygen, creating an electrochemical gradient over the inner membrane that drives transmembrane transport and the ATP synthase. Cytochrome c oxidase is the component of the respiratory chain that catalyzes the reduction of oxygen to water. Electrons originating from reduced cytochrome c in the intermembrane space (IMS) are transferred via the dinuclear copper A center (CU(A)) of subunit 2 and heme A of subunit 1 to the active site in subunit 1, a binuclear center (BNC) formed by heme A3 and copper B (CU(B)). The BNC reduces molecular oxygen to 2 water molecules using 4 electrons from cytochrome c in the IMS and 4 protons from the mitochondrial matrix. The chain is Cytochrome c oxidase subunit 2 (MT-CO2) from Aotus nigriceps (Black-headed night monkey).